Here is a 297-residue protein sequence, read N- to C-terminus: Protoheme IX farnesyltransferase 1 (297 aa).

A run of 9 helical transmembrane segments spans residues 23-43, 45-65, 93-113, 117-137, 145-165, 171-191, 216-236, 241-261, and 277-297; these read VVVL…RAGV, WSVL…AAVV, LPAL…LLAF, LTAW…TGFL, IVIG…AVSG, PLLL…ALAI, LHIL…YAIH, LYLA…WVLY, and IAYL…LLNL.

It belongs to the UbiA prenyltransferase family. Protoheme IX farnesyltransferase subfamily.

The protein resides in the cell inner membrane. The enzyme catalyses heme b + (2E,6E)-farnesyl diphosphate + H2O = Fe(II)-heme o + diphosphate. The protein operates within porphyrin-containing compound metabolism; heme O biosynthesis; heme O from protoheme: step 1/1. In terms of biological role, converts heme B (protoheme IX) to heme O by substitution of the vinyl group on carbon 2 of heme B porphyrin ring with a hydroxyethyl farnesyl side group. This Pseudomonas putida (strain GB-1) protein is Protoheme IX farnesyltransferase 1.